The primary structure comprises 38 residues: RSAQGMGKMERLLASYRGALEPSTPLGDLSGSLGHPVE.

Residues G18–E38 are disordered.

Produced by the medulla terminalis X-organ in the eyestalks and transported to the sinus gland where it is stored and released.

It localises to the secreted. The chain is CHH precursor-related peptide from Cancer pagurus (Rock crab).